The chain runs to 2475 residues: Gellan lyase (2475 aa).

The N-terminal stretch at 1–35 (MRFSWKKLVSAALVMALLVGIVYPAASGRGAVASA) is a signal peptide. Residues 623 to 708 (APANVQVAIS…QPATATSPGE (86 aa)) form the Fibronectin type-III domain. Positions 1295–1518 (GAFSLTIDDN…RDQIWVGRYG (224 aa)) constitute a NodB homology domain. One can recognise a Cohesin domain in the interval 2111–2223 (QPGQQLELTV…VSTAVSLSDF (113 aa)).

Post-translationally, subject to proteolytic processing after secretion. Cleavage occurs between Gly-1205 and Leu-1206. This gives rise to a N-terminal gellan lyase of 130 kDa being the mature form of the gellan lyase. The function of C-terminal gellan lyase is not known.

It is found in the secreted. It carries out the reaction Eliminative cleavage of beta-D-glucopyranosyl-(1-&gt;4)-beta-D-glucopyranosyluronate bonds of gellan backbone releasing tetrasaccharides containing a 4-deoxy-4,5-unsaturated D-glucopyranosyluronic acid at the non-reducing end. The tetrasaccharide produced from deacetylated gellan is beta-D-4-deoxy-Delta(4)-GlcAp-(1-&gt;4)-beta-D-Glcp-(1-&gt;4)-alpha-L-Rhap-(1-&gt;3)-beta-D-Glcp.. In terms of biological role, cleaves the glycosidic bonds of gellan backbone and releases tetrasaccharide units of glucuronyl-glucosyl-rhamnosyl-glucose with unsaturated glucuronic acid at the non-reducing terminal. The enzyme is highly specific to the heteropolysaccharide gellan, especially deacetylated gellan. In Bacillus sp, this protein is Gellan lyase.